The primary structure comprises 251 residues: Ribosomal RNA small subunit methyltransferase J (251 aa).

S-adenosyl-L-methionine-binding positions include 100–101, 116–117, and D170; these read RD and ER.

This sequence belongs to the methyltransferase superfamily. RsmJ family.

The protein localises to the cytoplasm. It carries out the reaction guanosine(1516) in 16S rRNA + S-adenosyl-L-methionine = N(2)-methylguanosine(1516) in 16S rRNA + S-adenosyl-L-homocysteine + H(+). Functionally, specifically methylates the guanosine in position 1516 of 16S rRNA. In Actinobacillus pleuropneumoniae serotype 5b (strain L20), this protein is Ribosomal RNA small subunit methyltransferase J.